A 210-amino-acid polypeptide reads, in one-letter code: MSWFITFEGPEGAGKTTQCALLAARLREAGYSLLVTREPGGTPLGETIREWLLAGEALRPETEALLFTAARAEHVWDRIRPALERGTIVLCDRYVDSTLAYQGAGRGLDEGWLRELHRIATGDLWPDLTILLDVPVEVGLARRRAAAATITRLDQEELAFHRRVRAWYHAAAQRDPQRWRVVDATLPPEVVADAVWATVTEVMKRGRRSP.

Gly9–Thr16 lines the ATP pocket.

Belongs to the thymidylate kinase family.

The catalysed reaction is dTMP + ATP = dTDP + ADP. Phosphorylation of dTMP to form dTDP in both de novo and salvage pathways of dTTP synthesis. This chain is Thymidylate kinase, found in Thermomicrobium roseum (strain ATCC 27502 / DSM 5159 / P-2).